Consider the following 642-residue polypeptide: Chaperone protein DnaK (642 aa).

Thr-200 is modified (phosphothreonine; by autocatalysis). The span at Gln-608–Gln-618 shows a compositional bias: low complexity. Positions Gln-608–Gln-642 are disordered.

The protein belongs to the heat shock protein 70 family.

Its function is as follows. Acts as a chaperone. This is Chaperone protein DnaK from Laribacter hongkongensis (strain HLHK9).